A 337-amino-acid polypeptide reads, in one-letter code: Dehydrogenase FUB6 (337 aa).

This sequence belongs to the zinc-containing alcohol dehydrogenase family. Quinone oxidoreductase subfamily.

Its pathway is mycotoxin biosynthesis. Functionally, dehydrogenase; part of the gene cluster that mediates the biosynthesis of fusaric acid, a mycotoxin with low to moderate toxicity to animals and humans, but with high phytotoxic properties. L-aspartate is suggested as fusaric acid amino acid precursor that is activated and further processed to O-acetyl-L-homoserine by cluster enzymes aspartate kinase FUB3 and homoserine O-acetyltransferase FUB5, as well as enzymes of the primary metabolism. The polyketide synthase (PKS) FUB1 generates the triketide trans-2-hexenal which is presumptively released by the hydrolase FUB4 and linked to the NRPS-bound amino acid precursor by NAD(P)-dependent dehydrogenase FUB6. FUB1, FUB4, and the non-canonical NRPS Fub8 may form an enzyme complex. Further processing of the NRPS-bound intermediate might be carried out by FUB6 and the O-acetylhomoserine FUB7, enabling a spontaneous electrocyclization to close the carbon backbone of fusaric acid. Dihydrofusaric acid is likely to be released via reduction by the thioester reductase (TR) domain of FUB8 whereupon the final oxidation to fusaric acid may (also) be performed by the FMN-dependent dehydrogenase FUB9. This Gibberella fujikuroi (strain CBS 195.34 / IMI 58289 / NRRL A-6831) (Bakanae and foot rot disease fungus) protein is Dehydrogenase FUB6.